The following is a 681-amino-acid chain: Methionine--tRNA ligase (681 aa).

Positions 18–28 (PYANGSIHLGH) match the 'HIGH' region motif. Positions 149, 152, 162, and 165 each coordinate Zn(2+). The 'KMSKS' region signature appears at 334-338 (KMSKS). K337 serves as a coordination point for ATP. The 102-residue stretch at 580–681 (DFAKLDLRIV…NGAEPGQRVS (102 aa)) folds into the tRNA-binding domain.

The protein belongs to the class-I aminoacyl-tRNA synthetase family. MetG type 1 subfamily. As to quaternary structure, homodimer. The cofactor is Zn(2+).

The protein localises to the cytoplasm. The catalysed reaction is tRNA(Met) + L-methionine + ATP = L-methionyl-tRNA(Met) + AMP + diphosphate. Is required not only for elongation of protein synthesis but also for the initiation of all mRNA translation through initiator tRNA(fMet) aminoacylation. The polypeptide is Methionine--tRNA ligase (Chromohalobacter salexigens (strain ATCC BAA-138 / DSM 3043 / CIP 106854 / NCIMB 13768 / 1H11)).